Consider the following 234-residue polypeptide: Large ribosomal subunit protein bL25 (234 aa).

The protein belongs to the bacterial ribosomal protein bL25 family. CTC subfamily. In terms of assembly, part of the 50S ribosomal subunit; part of the 5S rRNA/L5/L18/L25 subcomplex. Contacts the 5S rRNA. Binds to the 5S rRNA independently of L5 and L18.

Its function is as follows. This is one of the proteins that binds to the 5S RNA in the ribosome where it forms part of the central protuberance. The polypeptide is Large ribosomal subunit protein bL25 (Rhodopseudomonas palustris (strain BisA53)).